The following is a 312-amino-acid chain: 2,3-dihydroxyphenylpropionate/2,3-dihydroxicinnamic acid 1,2-dioxygenase (312 aa).

His-115 functions as the Proton donor in the catalytic mechanism. His-179 functions as the Proton acceptor in the catalytic mechanism.

This sequence belongs to the LigB/MhpB extradiol dioxygenase family. As to quaternary structure, homotetramer. Requires Fe(2+) as cofactor.

The enzyme catalyses 3-(2,3-dihydroxyphenyl)propanoate + O2 = (2Z,4E)-2-hydroxy-6-oxonona-2,4-dienedioate + H(+). It carries out the reaction (2E)-3-(2,3-dihydroxyphenyl)prop-2-enoate + O2 = (2Z,4E,7E)-2-hydroxy-6-oxonona-2,4,7-trienedioate + H(+). It participates in aromatic compound metabolism; 3-phenylpropanoate degradation. In terms of biological role, catalyzes the non-heme iron(II)-dependent oxidative cleavage of 2,3-dihydroxyphenylpropionic acid and 2,3-dihydroxicinnamic acid into 2-hydroxy-6-ketononadienedioate and 2-hydroxy-6-ketononatrienedioate, respectively. The polypeptide is 2,3-dihydroxyphenylpropionate/2,3-dihydroxicinnamic acid 1,2-dioxygenase (Azotobacter vinelandii (strain DJ / ATCC BAA-1303)).